Consider the following 1199-residue polypeptide: Major DNA-binding protein (1199 aa).

Residues 289-314 are disordered; the sequence is SGTTTARGARRNDVNSTSKPSPSGGF. The segment at 497-510 is a zinc-finger region; sequence CSLCEKHTRPVCAH. 2 consecutive short sequence motifs (required for filament formation) follow at residues 841–842 and 1146–1148; these read FW and FNF. The tract at residues 1172 to 1199 is required for nuclear localization; that stretch reads LKRPPEDDELFDLSGIPIKHGNITMEMI.

The protein belongs to the herpesviridae major DNA-binding protein family. As to quaternary structure, homooligomers. Forms double-helical filaments necessary for the formation of replication compartments within the host nucleus. Interacts with the origin-binding protein. Interacts with the helicase primase complex; this interaction stimulates primer synthesis activity of the helicase-primase complex. Interacts with the DNA polymerase. Interacts with the alkaline exonuclease; this interaction increases its nuclease processivity.

Its subcellular location is the host nucleus. Its function is as follows. Plays several crucial roles in viral infection. Participates in the opening of the viral DNA origin to initiate replication by interacting with the origin-binding protein. May disrupt loops, hairpins and other secondary structures present on ssDNA to reduce and eliminate pausing of viral DNA polymerase at specific sites during elongation. Promotes viral DNA recombination by performing strand-transfer, characterized by the ability to transfer a DNA strand from a linear duplex to a complementary single-stranded DNA circle. Can also catalyze the renaturation of complementary single strands. Additionally, reorganizes the host cell nucleus, leading to the formation of prereplicative sites and replication compartments. This process is driven by the protein which can form double-helical filaments in the absence of DNA. In Varicella-zoster virus (strain Oka vaccine) (HHV-3), this protein is Major DNA-binding protein.